Consider the following 375-residue polypeptide: Alpha-1,2-galactosyltransferase (375 aa).

Over 1-2 the chain is Cytoplasmic; sequence MR. The chain crosses the membrane as a helical; Signal-anchor for type II membrane protein span at residues 3–23; it reads FAPYLISAVVITTIILGGAWW. At 24–375 the chain is on the lumenal side; it reads TSAMDTKLQT…HIQNLLKPSS (352 aa).

Belongs to the glycosyltransferase 34 family. In terms of processing, O-glycosylated.

The protein resides in the golgi apparatus membrane. Functionally, involved in the O- and N-linked oligosaccharide modification of proteins transported through the Golgi stack. This occurs in cis Golgi where the enzyme transfers galactose from UDP-galactose to a variety of mannose based acceptors. The polypeptide is Alpha-1,2-galactosyltransferase (gma12) (Schizosaccharomyces pombe (strain 972 / ATCC 24843) (Fission yeast)).